Here is a 100-residue protein sequence, read N- to C-terminus: NAD(P)H-quinone oxidoreductase subunit 4L, chloroplastic (100 aa).

3 helical membrane-spanning segments follow: residues M1–I21, A29–N49, and I60–V80.

It belongs to the complex I subunit 4L family. NDH is composed of at least 16 different subunits, 5 of which are encoded in the nucleus.

Its subcellular location is the plastid. It is found in the chloroplast thylakoid membrane. The catalysed reaction is a plastoquinone + NADH + (n+1) H(+)(in) = a plastoquinol + NAD(+) + n H(+)(out). The enzyme catalyses a plastoquinone + NADPH + (n+1) H(+)(in) = a plastoquinol + NADP(+) + n H(+)(out). Functionally, NDH shuttles electrons from NAD(P)H:plastoquinone, via FMN and iron-sulfur (Fe-S) centers, to quinones in the photosynthetic chain and possibly in a chloroplast respiratory chain. The immediate electron acceptor for the enzyme in this species is believed to be plastoquinone. Couples the redox reaction to proton translocation, and thus conserves the redox energy in a proton gradient. The chain is NAD(P)H-quinone oxidoreductase subunit 4L, chloroplastic from Physcomitrium patens (Spreading-leaved earth moss).